Here is a 903-residue protein sequence, read N- to C-terminus: MSQDDAEVASGVVLEELSSWSEEMCRRELPSVLPRLLSMYQCSESWIEHIRILKIIVEMFLPHMNHLTLEETLFSQVLPKSIKLFDGMICELTSEARELSSQNLEIQVTIRNILQAMVQVIGGFTGCVRHVCATQKSVFLGSIQSLPSFILHIIKSAFVHCKNSECVYSGRLHLVSDLLQVLFKEAYSLQKQLMGLLDTVCLDPSVDENNALIMVGVIHSLLDICSVISGMDQAFHANTWKFIIKQSLKHHSVIKSQLRHKEIISSLCEDILFSFHSCLQLAEQITQPAAQGNADYRLFQKTLKLCRFFANSLLHYTKECLPFLSDSCCTLHQLYLQIHSKFLSLCAAKTSKAQQEEIASTFLVLLDPLISQLLKSQPFVQAVLASKLALPCELQLPQVLLLVVAMDKLPSQPQDVQTLWSTEDMTRMSILKGIFYNFGQCSGELSLPTHLQGTKGKGQAEVPVTLYQHVCVHLCAFVASFHSSLFPRLDAALLNAVLSTNMSTSLLAMDVWCFLARYGTAKLGAHHVTLVAHLVKSCPGKCVQLTNLSILLKRLLFFMAAPHQVQFIQKFSPKEADNLHLWQYISLQAFDADLRKPVACELVRVCRAQCRKWLSSTRTLAELDSLNTALSVVLTVCNSAGEALDSRQLTAVTEVLGELWTFINVEQIISQPYVQQAFSLLLQLLAFFIQTVDLQLISQVVNVLTSVIKLEPPDHVSLAVLDFISSLGKLYISQTIRDKVLPSLSCILTSLIVNKNWLLEQHTLEAFTQFAEGTKHEEIVPQCLGSEEIKNKVVSFLEKTESVDEAEVATVDNVKQEKGTFWEPAAKVTVEEVKTSAFQPHTKRARRVLPFEEEYRSVFKAAARALETTEFLLKHSLAPAWLLPELEALQGRIEKLKRCVLTG.

Phosphoserine occurs at positions 101 and 795. At Lys843 the chain carries N6-acetyllysine.

Interacts (via its N-terminal region) with PLK1; controls PLK1 kinase activity. Interacts (via the KVVXF motif) with PPP1CC; controls PLK1 kinase activity. Interacts with FIGNL1; may regulate homologous recombination. Post-translationally, phosphorylation at Ser-101 by PLK1 strengthens FIRRM-PLK1 interaction. Phosphorylation at Ser-795 by PLK1 negatively regulates its interaction with PPP1CC.

It localises to the chromosome. It is found in the centromere. The protein localises to the kinetochore. Its subcellular location is the nucleus. The protein resides in the midbody. It localises to the cytoplasm. It is found in the cytoskeleton. The protein localises to the spindle. Regulates PLK1 kinase activity at kinetochores and promotes faithful chromosome segregation in prometaphase by bridging kinase and phosphatase activities. Phosphorylation of FIRRM by PLK1 negatively regulates its interaction with the phosphatase, PPP1CC, thus creating a negative feedback loop for maintaining proper PLK1 kinase activity during mitosis. In complex with FIGL1 may regulate homologous recombination. The polypeptide is FIGNL1-interacting regulator of recombination and mitosis (Mus musculus (Mouse)).